A 196-amino-acid polypeptide reads, in one-letter code: MNKLILIIDNYDSFTHNLYQMAGEIMMEMDSADIMVVRNDEVDIDYVRGLDPERIIISPGPGNPIKREDFGICSEVIGEFTDRPILGVCLGHQGIFHYFGGVVGYGEPVHGKISEVFHDGSELFRGVPNPFRATRYHSLRCECSGVPEDILVSASAPDGTIMAIRHRQYPVYGLQFHPESAGTPHGRDILENFLRM.

Residues 4 to 196 (LILIIDNYDS…RDILENFLRM (193 aa)) form the Glutamine amidotransferase type-1 domain. 60 to 62 (GPG) is an L-glutamine binding site. The active-site Nucleophile; for GATase activity is the Cys-89. Residues Gln-93 and 138–139 (SL) contribute to the L-glutamine site. Catalysis depends on for GATase activity residues His-177 and Glu-179.

As to quaternary structure, heterotetramer consisting of two non-identical subunits: a beta subunit (TrpG) and a large alpha subunit (TrpE).

The enzyme catalyses chorismate + L-glutamine = anthranilate + pyruvate + L-glutamate + H(+). It functions in the pathway amino-acid biosynthesis; L-tryptophan biosynthesis; L-tryptophan from chorismate: step 1/5. Its function is as follows. Part of a heterotetrameric complex that catalyzes the two-step biosynthesis of anthranilate, an intermediate in the biosynthesis of L-tryptophan. In the first step, the glutamine-binding beta subunit (TrpG) of anthranilate synthase (AS) provides the glutamine amidotransferase activity which generates ammonia as a substrate that, along with chorismate, is used in the second step, catalyzed by the large alpha subunit of AS (TrpE) to produce anthranilate. In the absence of TrpG, TrpE can synthesize anthranilate directly from chorismate and high concentrations of ammonia. This chain is Anthranilate synthase component 2 (trpG), found in Methanothermobacter marburgensis (strain ATCC BAA-927 / DSM 2133 / JCM 14651 / NBRC 100331 / OCM 82 / Marburg) (Methanobacterium thermoautotrophicum).